The sequence spans 916 residues: Major intrinsically disordered Notch2-binding receptor 1 (916 aa).

Residues 1 to 891 (METSQETSLF…AEFRRAKVCK (891 aa)) lie on the Cytoplasmic side of the membrane. Disordered stretches follow at residues 390-409 (EEKL…PAPE), 553-591 (KSDC…SEEE), 648-675 (SLTS…GPKL), 705-726 (TRPS…IASI), and 745-782 (NEEE…LPKQ). Composition is skewed to basic and acidic residues over residues 553–564 (KSDCDSSPEHNL) and 575–591 (KGDK…SEEE). Serine 711 is subject to Phosphoserine. Positions 750–771 (KDTGPGDNKDWHRKSKEADRQY) are enriched in basic and acidic residues. A helical membrane pass occupies residues 892–912 (IAALIAAAACTVILVIVVPIC). The Extracellular segment spans residues 913–916 (TMKS).

The protein belongs to the MINAR family. Interacts with NOTCH2; this interaction increases MINAR1 stability. Interacts (via N-terminus) with DEPTOR (via PDZ domain); this interaction may stabilize DEPTOR protein by impairing its ubiquitination. As to expression, widely expressed, including in breast epithelial cells and endothelial cells (at protein level). Expression is down-regulated in advanced breast tumors (at protein level).

It is found in the cell membrane. Its function is as follows. Intrinsically disordered protein which may negatively regulate mTOR signaling pathway by stabilizing the mTOR complex component DEPTOR. Negatively regulates angiogenesis. Negatively regulates cell growth. Negatively regulates neurite outgrowth in hippocampal neurons. The polypeptide is Major intrinsically disordered Notch2-binding receptor 1 (Homo sapiens (Human)).